The sequence spans 394 residues: Ceramide glucosyltransferase (394 aa).

Residues 1-10 (MAVLDLALQG) are Lumenal-facing. Residues 11–32 (LAIFGCVLFFVLWFMHFLSIVY) traverse the membrane as a helical segment. The Cytoplasmic portion of the chain corresponds to 33-195 (TRLHLNKKVS…QVYFGTSHPR (163 aa)). Residue Asp-92 is a short sequence motif, D1. Position 144 (Asp-144) is a short sequence motif, D2. The helical transmembrane segment at 196–215 (SYISANVTGFKCVTGMSCLM) threads the bilayer. At 216-287 (RKEVLDQAGG…KLRINMLPAT (72 aa)) the chain is on the lumenal side. A short sequence motif (D3) is located at residue Asp-236. Asp-236 serves as the catalytic Proton acceptor. The (Q/R)XXRW signature appears at 272 to 276 (RMIRW). Residues 288–304 (IICEPISECFVASLIIG) traverse the membrane as a helical segment. The Cytoplasmic segment spans residues 305–309 (WAAHH). The helical transmembrane segment at 310–328 (IFRWDIMVFFMCHCLAWFI) threads the bilayer. Residues 329–348 (FDYIQLRGVQGGPLNFSKLD) are Lumenal-facing. Residues 349 to 369 (YAVAWFIRESMTIYIFLSALW) traverse the membrane as a helical segment. At 370–394 (DPTISWRTGRYRLRCGGTAEEILDV) the chain is on the cytoplasmic side.

The protein belongs to the glycosyltransferase 2 family.

It localises to the golgi apparatus membrane. It carries out the reaction an N-acylsphing-4-enine + UDP-alpha-D-glucose = a beta-D-glucosyl-(1&lt;-&gt;1')-N-acylsphing-4-enine + UDP + H(+). It catalyses the reaction UDP-alpha-D-xylose + an N-acylsphing-4-enine = a beta-D-xylosyl-(1&lt;-&gt;1')-N-acylsphing-4-enine + UDP + H(+). The catalysed reaction is N-(9Z-octadecenoyl)-sphing-4-enine + UDP-alpha-D-xylose = beta-D-xylosyl-(1&lt;-&gt;1')-N-(9Z-octadecenoyl)-sphing-4-enine + UDP + H(+). It participates in lipid metabolism; sphingolipid metabolism. In terms of biological role, participates in the initial step of the glucosylceramide-based glycosphingolipid/GSL synthetic pathway at the cytosolic surface of the Golgi. Catalyzes the transfer of glucose from UDP-glucose to ceramide to produce glucosylceramide/GlcCer (such as beta-D-glucosyl-(1&lt;-&gt;1')-N-acylsphing-4-enine). Glucosylceramide is the core component of glycosphingolipids/GSLs, amphipathic molecules consisting of a ceramide lipid moiety embedded in the outer leaflet of the membrane, linked to one of hundreds of different externally oriented oligosaccharide structures. Glycosphingolipids are essential components of membrane microdomains that mediate membrane trafficking and signal transduction. They are implicated in many fundamental cellular processes, including growth, differentiation, migration, morphogenesis, cell-to-cell and cell-to-matrix interactions. Catalyzes the synthesis of xylosylceramide/XylCer (such as beta-D-xylosyl-(1&lt;-&gt;1')-N-acylsphing-4-enine) using UDP-Xyl as xylose donor. The sequence is that of Ceramide glucosyltransferase (ugcg) from Xenopus tropicalis (Western clawed frog).